The sequence spans 99 residues: Putative septation protein SpoVG (99 aa).

Belongs to the SpoVG family.

In terms of biological role, could be involved in septation. The polypeptide is Putative septation protein SpoVG (Myxococcus xanthus (strain DK1622)).